Reading from the N-terminus, the 368-residue chain is 3-isopropylmalate dehydrogenase (368 aa).

An NAD(+)-binding site is contributed by 79–91; it reads GPEWGTSSTVRPE. The substrate site is built by arginine 98, arginine 108, arginine 137, and aspartate 226. Residues aspartate 226, aspartate 251, and aspartate 255 each coordinate Mg(2+). 291–303 is a binding site for NAD(+); sequence GSAPDISGKGIVN.

Belongs to the isocitrate and isopropylmalate dehydrogenases family. As to quaternary structure, homodimer. Requires Mg(2+) as cofactor. The cofactor is Mn(2+).

It localises to the cytoplasm. The catalysed reaction is (2R,3S)-3-isopropylmalate + NAD(+) = 4-methyl-2-oxopentanoate + CO2 + NADH. Its pathway is amino-acid biosynthesis; L-leucine biosynthesis; L-leucine from 3-methyl-2-oxobutanoate: step 3/4. In terms of biological role, catalyzes the oxidation of 3-carboxy-2-hydroxy-4-methylpentanoate (3-isopropylmalate) to 3-carboxy-4-methyl-2-oxopentanoate. The product decarboxylates to 4-methyl-2 oxopentanoate. This is 3-isopropylmalate dehydrogenase (LEU1) from Sordaria macrospora.